We begin with the raw amino-acid sequence, 729 residues long: Transketolase (729 aa).

Histidine 97 serves as a coordination point for substrate. Thiamine diphosphate-binding positions include histidine 138 and 186-188; that span reads GPL. Residue aspartate 227 coordinates Mg(2+). Residues glycine 228 and asparagine 257 each coordinate thiamine diphosphate. Mg(2+) is bound by residues asparagine 257 and isoleucine 259. Substrate is bound by residues histidine 332, arginine 423, and serine 450. Histidine 332 lines the thiamine diphosphate pocket. Residue glutamate 477 is the Proton donor of the active site. Thiamine diphosphate is bound at residue phenylalanine 503. Substrate contacts are provided by histidine 527, aspartate 535, and arginine 586.

It belongs to the transketolase family. In terms of assembly, homodimer. Requires Mg(2+) as cofactor. The cofactor is Ca(2+). Mn(2+) serves as cofactor. It depends on Co(2+) as a cofactor. Thiamine diphosphate is required as a cofactor.

The enzyme catalyses D-sedoheptulose 7-phosphate + D-glyceraldehyde 3-phosphate = aldehydo-D-ribose 5-phosphate + D-xylulose 5-phosphate. Its function is as follows. Catalyzes the transfer of a two-carbon ketol group from a ketose donor to an aldose acceptor, via a covalent intermediate with the cofactor thiamine pyrophosphate. The protein is Transketolase of Streptococcus pyogenes serotype M6 (strain ATCC BAA-946 / MGAS10394).